Here is a 72-residue protein sequence, read N- to C-terminus: Probable neurotoxin pcD-993 (72 aa).

Residues 1 to 19 (MNYLVMISFALLLVIGVES) form the signal peptide. The LCN-type CS-alpha/beta domain maps to 21–72 (RDGYFVEPDNCVVHCMPSSEMCDRGCKHNGATSGSCKAFSKGGNACWCKGLR). 3 cysteine pairs are disulfide-bonded: Cys-35–Cys-56, Cys-42–Cys-66, and Cys-46–Cys-68. Residue Arg-72 is a propeptide, removed by a carboxypeptidase.

The protein belongs to the long (3 C-C) scorpion toxin superfamily. As to expression, expressed by the venom gland.

It is found in the secreted. This is Probable neurotoxin pcD-993 from Androctonus australis (Sahara scorpion).